The chain runs to 344 residues: tRNA N6-adenosine threonylcarbamoyltransferase (344 aa).

His-112 and His-116 together coordinate Fe cation. Substrate contacts are provided by residues 134 to 138 (LASGG), Asp-167, Gly-180, and Asn-280. Asp-308 serves as a coordination point for Fe cation.

This sequence belongs to the KAE1 / TsaD family. Fe(2+) is required as a cofactor.

The protein localises to the cytoplasm. It catalyses the reaction L-threonylcarbamoyladenylate + adenosine(37) in tRNA = N(6)-L-threonylcarbamoyladenosine(37) in tRNA + AMP + H(+). In terms of biological role, required for the formation of a threonylcarbamoyl group on adenosine at position 37 (t(6)A37) in tRNAs that read codons beginning with adenine. Is involved in the transfer of the threonylcarbamoyl moiety of threonylcarbamoyl-AMP (TC-AMP) to the N6 group of A37, together with TsaE and TsaB. TsaD likely plays a direct catalytic role in this reaction. This is tRNA N6-adenosine threonylcarbamoyltransferase from Rickettsia conorii (strain ATCC VR-613 / Malish 7).